The following is a 231-amino-acid chain: Ion-translocating oxidoreductase complex subunit E (231 aa).

Helical transmembrane passes span 18–38, 39–59, 63–83, 86–106, 125–145, and 182–202; these read ALVQLLGLCPLLAVTSTATNA, LGLGLATTLVLTLTNLTISTL, TPAEIRIPIYVMIIASVVSAV, LINAYAFGLYQSLGIFIPLIV, ALSALDGFSIGTGATCAMFVL, and PFLLAMLPPGAFIGLGLMLAG.

Belongs to the NqrDE/RnfAE family. The complex is composed of six subunits: RsxA, RsxB, RsxC, RsxD, RsxE and RsxG.

The protein localises to the cell inner membrane. Functionally, part of a membrane-bound complex that couples electron transfer with translocation of ions across the membrane. Required to maintain the reduced state of SoxR. The sequence is that of Ion-translocating oxidoreductase complex subunit E from Shigella flexneri serotype 5b (strain 8401).